The primary structure comprises 304 residues: Homoserine kinase (304 aa).

90–100 contacts ATP; that stretch reads PLARGLGSSAS.

This sequence belongs to the GHMP kinase family. Homoserine kinase subfamily.

The protein resides in the cytoplasm. The enzyme catalyses L-homoserine + ATP = O-phospho-L-homoserine + ADP + H(+). It participates in amino-acid biosynthesis; L-threonine biosynthesis; L-threonine from L-aspartate: step 4/5. In terms of biological role, catalyzes the ATP-dependent phosphorylation of L-homoserine to L-homoserine phosphate. The chain is Homoserine kinase from Staphylococcus aureus (strain bovine RF122 / ET3-1).